A 1387-amino-acid chain; its full sequence is Kinesin-like protein KIF15 (1387 aa).

Residues M1–E23 form a disordered region. A compositionally biased stretch (polar residues) spans R10 to N22. The region spanning A26–I363 is the Kinesin motor domain. Position 109 to 116 (G109 to T116) interacts with ATP. The stretch at V368–M1132 forms a coiled coil. S568 is subject to Phosphoserine. K1009 carries the post-translational modification N6-acetyllysine. Phosphoserine is present on residues S1141 and S1169.

This sequence belongs to the TRAFAC class myosin-kinesin ATPase superfamily. Kinesin family. KLP2 subfamily. In terms of assembly, interacts with MKI67 and TPX2. Expressed in brain (neurons in the external germinal layer of the cerebellum and in ventricular zones) (at protein level). Expressed in spleen and testis.

The protein resides in the cytoplasm. Its subcellular location is the cytoskeleton. It is found in the spindle. Its function is as follows. Plus-end directed kinesin-like motor enzyme involved in mitotic spindle assembly. This chain is Kinesin-like protein KIF15 (Kif15), found in Mus musculus (Mouse).